The following is a 400-amino-acid chain: Subtilisin-like protease 7 (400 aa).

Residues 1–20 (MGFITKAIPLALAAASVING) form the signal peptide. A propeptide spanning residues 21-119 (AEIMETRAGV…IERDARVQIN (99 aa)) is cleaved from the precursor. One can recognise an Inhibitor I9 domain in the interval 36–118 (KYIVVMNDGM…YIERDARVQI (83 aa)). Residue asparagine 58 is glycosylated (N-linked (GlcNAc...) asparagine). Positions 129 to 400 (SWGLARVGSK…SKLINNGSGM (272 aa)) constitute a Peptidase S8 domain. Residues aspartate 161 and histidine 192 each act as charge relay system in the active site. N-linked (GlcNAc...) asparagine glycans are attached at residues asparagine 222 and asparagine 252. The active-site Charge relay system is serine 346. An N-linked (GlcNAc...) asparagine glycan is attached at asparagine 396.

Belongs to the peptidase S8 family.

Its subcellular location is the secreted. Functionally, secreted subtilisin-like serine protease with keratinolytic activity that contributes to pathogenicity. The chain is Subtilisin-like protease 7 (SUB7) from Arthroderma benhamiae (Trichophyton mentagrophytes).